Reading from the N-terminus, the 807-residue chain is Sucrose synthase 2 (807 aa).

The segment at 274–752 is GT-B glycosyltransferase; sequence MVFNVVILSP…GLKRIYERYT (479 aa).

It belongs to the glycosyltransferase 1 family. Plant sucrose synthase subfamily. In terms of tissue distribution, detected in the whole plant but at lower levels. Predominantly expressed in developing siliques. Also detected in the root tip. Detected in the embryo, endosperm and seed coat (at the protein level).

It is found in the cytoplasm. It localises to the plastid membrane. The catalysed reaction is an NDP-alpha-D-glucose + D-fructose = a ribonucleoside 5'-diphosphate + sucrose + H(+). Its function is as follows. Sucrose-cleaving enzyme that provides UDP-glucose and fructose for various metabolic pathways. Modulates metabolic homeostasis and directs carbon towards starch synthesis in developing seeds. This is Sucrose synthase 2 (SUS2) from Arabidopsis thaliana (Mouse-ear cress).